A 416-amino-acid chain; its full sequence is uncharacterized protein (416 aa).

An N-acetyltransferase domain is found at 3–150 (LDVRTITPSE…SVYRAGLDAR (148 aa)). Acetyl-CoA-binding positions include 83 to 85 (VTV) and 91 to 96 (RRGLLS). Tyr124 (proton donor) is an active-site residue. The active-site Proton acceptor; via carboxylate is Phe416.

This sequence belongs to the acetyltransferase Eis family. As to quaternary structure, homohexamer; trimer of dimers.

This is an uncharacterized protein from Streptomyces griseus subsp. griseus (strain JCM 4626 / CBS 651.72 / NBRC 13350 / KCC S-0626 / ISP 5235).